Consider the following 140-residue polypeptide: 3-hydroxyacyl-[acyl-carrier-protein] dehydratase FabZ (140 aa).

Residue histidine 47 is part of the active site.

It belongs to the thioester dehydratase family. FabZ subfamily.

Its subcellular location is the cytoplasm. It carries out the reaction a (3R)-hydroxyacyl-[ACP] = a (2E)-enoyl-[ACP] + H2O. Its function is as follows. Involved in unsaturated fatty acids biosynthesis. Catalyzes the dehydration of short chain beta-hydroxyacyl-ACPs and long chain saturated and unsaturated beta-hydroxyacyl-ACPs. This Streptococcus pneumoniae serotype 4 (strain ATCC BAA-334 / TIGR4) protein is 3-hydroxyacyl-[acyl-carrier-protein] dehydratase FabZ.